The chain runs to 743 residues: 1,4-alpha-glucan branching enzyme GlgB 2 (743 aa).

The disordered stretch occupies residues Met-1–Ser-23. Asp-422 (nucleophile) is an active-site residue. Glu-475 acts as the Proton donor in catalysis.

The protein belongs to the glycosyl hydrolase 13 family. GlgB subfamily. Monomer.

It carries out the reaction Transfers a segment of a (1-&gt;4)-alpha-D-glucan chain to a primary hydroxy group in a similar glucan chain.. Its pathway is glycan biosynthesis; glycogen biosynthesis. Functionally, catalyzes the formation of the alpha-1,6-glucosidic linkages in glycogen by scission of a 1,4-alpha-linked oligosaccharide from growing alpha-1,4-glucan chains and the subsequent attachment of the oligosaccharide to the alpha-1,6 position. The chain is 1,4-alpha-glucan branching enzyme GlgB 2 from Xanthomonas euvesicatoria pv. vesicatoria (strain 85-10) (Xanthomonas campestris pv. vesicatoria).